Here is an 83-residue protein sequence, read N- to C-terminus: Host transcription reprogramming factor 9 (83 aa).

A signal peptide spans 1–19; sequence MQFSKITLAIVLYALGTAA. The C2H2-type zinc finger occupies 54-77; that stretch reads YRCDKCEKEFVKGNDFFNHGGRGH.

Its subcellular location is the secreted. It localises to the host nucleus. In terms of biological role, probable secreted effector that translocates into the nuclei of host cells to reprogram the expression of targeted genes by binding on effector binding elements in rice. This Pyricularia oryzae (strain 70-15 / ATCC MYA-4617 / FGSC 8958) (Rice blast fungus) protein is Host transcription reprogramming factor 9.